Here is a 489-residue protein sequence, read N- to C-terminus: Zinc finger protein 58 (489 aa).

The region spanning 2–73 (LSFWDVAIDF…KRQAAAAVHP (72 aa)) is the KRAB domain. Residues 78–100 (NKCKDFSKAFFCKSLLTQHQRIR) form a C2H2-type 1; degenerate zinc finger. C2H2-type zinc fingers lie at residues 106–128 (FKCEECGKAFNNRSNLSEHKRIH), 134–156 (YKCEECGKAFRIRSKLSTHQRVH), 162–184 (YKCEECGKAFNSHSNLSEHKRIH), 190–212 (YKCEECGKAFSTRSTYYRHQKNH), 218–240 (YKCEECAKEFSYPSLLKVHQRIH), 246–268 (YKCEECGKPFYCPLLLKKHQIIH), 274–296 (YKCAECGKAFHYPSLLKRHQRIH), 302–324 (CKCKDCDRAFYSSAFLKRHQRIH), 330–352 (YKCGECGKRFCSFPHLQYHQRFH), 358–380 (YKCEQCGKTFSTLSYLPWHKLRH), 386–408 (YKCEKCGKMFYSTLDLKKHQKIH), 410–432 (YKCGECHYGFPNYAALTAHQRVH), 438–460 (HVCEQCGKDFSRIDSLNQHQLVH), and 466–488 (YKCEKCGKCFYRSSSLKRHQGIH).

It belongs to the krueppel C2H2-type zinc-finger protein family. In terms of tissue distribution, expressed in liver, testis and, at considerably lower levels, in brain, spleen and heart.

It localises to the nucleus. Its function is as follows. May have a role during differentiation processes. This chain is Zinc finger protein 58 (Zfp58), found in Mus musculus (Mouse).